The primary structure comprises 104 residues: ATP-dependent Clp protease adapter protein ClpS (104 aa).

Belongs to the ClpS family. Binds to the N-terminal domain of the chaperone ClpA.

Its function is as follows. Involved in the modulation of the specificity of the ClpAP-mediated ATP-dependent protein degradation. The protein is ATP-dependent Clp protease adapter protein ClpS of Bordetella bronchiseptica (strain ATCC BAA-588 / NCTC 13252 / RB50) (Alcaligenes bronchisepticus).